The sequence spans 1068 residues: Protein AF-10 (1068 aa).

The PHD-type 1 zinc finger occupies 22-74 (IGGCCVCSDERGWAENPLVYCDGHGCSVAVHQACYGIVQVPTGPWFCRKCESQ). The segment at 79–112 (RVRCELCPHKDGALKRTDNGGWAHVVCALYIPEV) adopts a C2HC pre-PHD-type zinc-finger fold. Residues 106-190 (ALYIPEVQFA…EGNGADNVQY (85 aa)) form a required for interaction with histone H3 region. The segment at 135–198 (KTCYICDEQG…QYCGYCKYHF (64 aa)) adopts a PHD-type 2 zinc-finger fold. Positions 207–260 (GSNRSYEQSLSDSSSHSQDKHHEKEKKKYKEKDKHKQKHKKQPEPSPALVPSLT) are disordered. Ser-217 carries the post-translational modification Phosphoserine. Residues 223–240 (SQDKHHEKEKKKYKEKDK) show a composition bias toward basic and acidic residues. The residue at position 252 (Ser-252) is a Phosphoserine. Residue Lys-280 forms a Glycyl lysine isopeptide (Lys-Gly) (interchain with G-Cter in SUMO2) linkage. Residues 296-305 (EVSAHTSSGK) are compositionally biased toward polar residues. 2 disordered regions span residues 296 to 416 (EVSA…SFSS) and 428 to 506 (SQPK…SVAS). Basic and acidic residues predominate over residues 306-317 (DVSEARGSEGKG). The segment covering 340 to 351 (TAVSASSPFPQG) has biased composition (polar residues). The span at 352 to 372 (SFSGTPGSVKSSSGSSVQSPQ) shows a compositional bias: low complexity. Polar residues-rich tracts occupy residues 387–396 (YTHTQQPSST), 404–416 (SGSQ…SFSS), and 428–446 (SQPK…SSLP). Ser-436 is subject to Phosphoserine. Residues 465–483 (EKKRKGNKQSKHGPGRPKG) show a composition bias toward basic residues. Residues 490–506 (VSHLSVSSASPTSSVAS) show a composition bias toward low complexity. Ser-532 bears the Phosphoserine mark. A compositionally biased stretch (low complexity) spans 583–594 (SGSGSSTPVSSS). Disordered stretches follow at residues 583-613 (SGSG…LSPS) and 660-698 (SESS…NLQL). The span at 595 to 604 (HIPQQSSGHL) shows a compositional bias: polar residues. Positions 681–692 (SSPRGSLSPRSP) are enriched in low complexity. Ser-686, Ser-688, and Ser-691 each carry phosphoserine. The segment at 752-780 (LQVENRRLEEQIKNLTAKKERLQLLNAQL) is leucine-zipper. Disordered regions lie at residues 786–869 (AITT…VSGV) and 1040–1068 (PFLT…QEKS). Positions 787–816 (ITTNPSPSHQMHTYTAQTAPPPDSLNSSKS) are enriched in polar residues. Low complexity-rich tracts occupy residues 836 to 850 (LTSS…SALS) and 857 to 869 (QSPA…VSGV). The segment covering 1040 to 1054 (PFLTIHGDSTSQKVT) has biased composition (polar residues).

As to quaternary structure, self-associates. Interacts with FSTL3; the interaction enhances MLLT10 in vitro transcriptional activity and self-association. Interacts with YEATS4. Interacts with SS18. Interacts with DOT1L. Interacts with histone H3; interaction is necessary for MLLT10 binding to nucleosomes; interaction is inhibited by histone H3 'Lys-27' methylations (H3K27me1, H3K27me2 and H3K27me3) amd acetylation; interaction stabilizes association of MLLT10 at chromatin; interaction is essential for histone H3 'Lys-79' dimethylation (H3K79me2).

Its subcellular location is the nucleus. In terms of biological role, probably involved in transcriptional regulation. Binds to cruciform DNA. In cells, binding to unmodified histone H3 regulates DOT1L functions including histone H3 'Lys-79' dimethylation (H3K79me2) and gene activation. In Mus musculus (Mouse), this protein is Protein AF-10.